The chain runs to 91 residues: CRISPR-associated endoribonuclease Cas2 (91 aa).

Residue aspartate 14 coordinates Mg(2+).

The protein belongs to the CRISPR-associated endoribonuclease Cas2 protein family. In terms of assembly, homodimer, forms a heterotetramer with a Cas1 homodimer. Requires Mg(2+) as cofactor.

Its function is as follows. CRISPR (clustered regularly interspaced short palindromic repeat), is an adaptive immune system that provides protection against mobile genetic elements (viruses, transposable elements and conjugative plasmids). CRISPR clusters contain sequences complementary to antecedent mobile elements and target invading nucleic acids. CRISPR clusters are transcribed and processed into CRISPR RNA (crRNA). Functions as a ssRNA-specific endoribonuclease. Involved in the integration of spacer DNA into the CRISPR cassette. This chain is CRISPR-associated endoribonuclease Cas2, found in Nanoarchaeum equitans (strain Kin4-M).